We begin with the raw amino-acid sequence, 835 residues long: DNA primase (835 aa).

A CHC2-type zinc finger spans residues Cys778 to Cys817.

It belongs to the herpesviridae DNA primase family. In terms of assembly, associates with the helicase and the primase-associated factor to form the helicase-primase factor.

The protein localises to the host nucleus. Essential component of the helicase/primase complex. Unwinds the DNA at the replication forks and generates single-stranded DNA for both leading and lagging strand synthesis. The primase initiates primer synthesis and thereby produces large amount of short RNA primers on the lagging strand that the polymerase elongates using dNTPs. This is DNA primase (56) from Saimiri sciureus (Common squirrel monkey).